Consider the following 155-residue polypeptide: SsrA-binding protein (155 aa).

Belongs to the SmpB family.

The protein localises to the cytoplasm. Functionally, required for rescue of stalled ribosomes mediated by trans-translation. Binds to transfer-messenger RNA (tmRNA), required for stable association of tmRNA with ribosomes. tmRNA and SmpB together mimic tRNA shape, replacing the anticodon stem-loop with SmpB. tmRNA is encoded by the ssrA gene; the 2 termini fold to resemble tRNA(Ala) and it encodes a 'tag peptide', a short internal open reading frame. During trans-translation Ala-aminoacylated tmRNA acts like a tRNA, entering the A-site of stalled ribosomes, displacing the stalled mRNA. The ribosome then switches to translate the ORF on the tmRNA; the nascent peptide is terminated with the 'tag peptide' encoded by the tmRNA and targeted for degradation. The ribosome is freed to recommence translation, which seems to be the essential function of trans-translation. The sequence is that of SsrA-binding protein from Lactococcus lactis subsp. cremoris (strain MG1363).